We begin with the raw amino-acid sequence, 382 residues long: 3-isopropylmalate dehydrogenase (382 aa).

Residue 91–102 (GPKWGTGSVRPE) participates in NAD(+) binding. Arginine 109, arginine 119, arginine 148, and aspartate 240 together coordinate substrate. Residues aspartate 240, aspartate 265, and aspartate 269 each coordinate Mg(2+). 304–315 (GSAPDLTENKVN) serves as a coordination point for NAD(+).

It belongs to the isocitrate and isopropylmalate dehydrogenases family. As to quaternary structure, homodimer. It depends on Mg(2+) as a cofactor. The cofactor is Mn(2+).

It is found in the cytoplasm. It carries out the reaction (2R,3S)-3-isopropylmalate + NAD(+) = 4-methyl-2-oxopentanoate + CO2 + NADH. The protein operates within amino-acid biosynthesis; L-leucine biosynthesis; L-leucine from 3-methyl-2-oxobutanoate: step 3/4. Functionally, catalyzes the oxidation of 3-carboxy-2-hydroxy-4-methylpentanoate (3-isopropylmalate) to 3-carboxy-4-methyl-2-oxopentanoate. The product decarboxylates to 4-methyl-2 oxopentanoate. This is 3-isopropylmalate dehydrogenase (LEU2) from Debaryomyces hansenii (strain ATCC 36239 / CBS 767 / BCRC 21394 / JCM 1990 / NBRC 0083 / IGC 2968) (Yeast).